Reading from the N-terminus, the 249-residue chain is Aspartate/glutamate leucyltransferase (249 aa).

It belongs to the R-transferase family. Bpt subfamily.

The protein localises to the cytoplasm. It carries out the reaction N-terminal L-glutamyl-[protein] + L-leucyl-tRNA(Leu) = N-terminal L-leucyl-L-glutamyl-[protein] + tRNA(Leu) + H(+). The catalysed reaction is N-terminal L-aspartyl-[protein] + L-leucyl-tRNA(Leu) = N-terminal L-leucyl-L-aspartyl-[protein] + tRNA(Leu) + H(+). Functionally, functions in the N-end rule pathway of protein degradation where it conjugates Leu from its aminoacyl-tRNA to the N-termini of proteins containing an N-terminal aspartate or glutamate. In Brucella abortus (strain S19), this protein is Aspartate/glutamate leucyltransferase.